The chain runs to 130 residues: Small ribosomal subunit protein uS9 (130 aa).

This sequence belongs to the universal ribosomal protein uS9 family.

This Hamiltonella defensa subsp. Acyrthosiphon pisum (strain 5AT) protein is Small ribosomal subunit protein uS9.